The following is a 454-amino-acid chain: Bifunctional protein GlmU (454 aa).

Residues Met1 to Lys225 are pyrophosphorylase. Residues Leu6–Gly9, Lys20, Gln71, Gly76–Thr77, Tyr98–Asp100, Gly135, Glu150, Asn165, and Asn223 contribute to the UDP-N-acetyl-alpha-D-glucosamine site. Asp100 serves as a coordination point for Mg(2+). Asn223 provides a ligand contact to Mg(2+). Residues Val226–Ala246 form a linker region. An N-acetyltransferase region spans residues Gly247–Lys454. The UDP-N-acetyl-alpha-D-glucosamine site is built by Arg329 and Lys347. Catalysis depends on His359, which acts as the Proton acceptor. Tyr362 and Asn373 together coordinate UDP-N-acetyl-alpha-D-glucosamine. Residues Ala376, Asn382 to Tyr383, Ser401, Ala419, and Arg436 contribute to the acetyl-CoA site.

This sequence in the N-terminal section; belongs to the N-acetylglucosamine-1-phosphate uridyltransferase family. It in the C-terminal section; belongs to the transferase hexapeptide repeat family. As to quaternary structure, homotrimer. The cofactor is Mg(2+).

The protein localises to the cytoplasm. The catalysed reaction is alpha-D-glucosamine 1-phosphate + acetyl-CoA = N-acetyl-alpha-D-glucosamine 1-phosphate + CoA + H(+). It carries out the reaction N-acetyl-alpha-D-glucosamine 1-phosphate + UTP + H(+) = UDP-N-acetyl-alpha-D-glucosamine + diphosphate. Its pathway is nucleotide-sugar biosynthesis; UDP-N-acetyl-alpha-D-glucosamine biosynthesis; N-acetyl-alpha-D-glucosamine 1-phosphate from alpha-D-glucosamine 6-phosphate (route II): step 2/2. It participates in nucleotide-sugar biosynthesis; UDP-N-acetyl-alpha-D-glucosamine biosynthesis; UDP-N-acetyl-alpha-D-glucosamine from N-acetyl-alpha-D-glucosamine 1-phosphate: step 1/1. It functions in the pathway bacterial outer membrane biogenesis; LPS lipid A biosynthesis. In terms of biological role, catalyzes the last two sequential reactions in the de novo biosynthetic pathway for UDP-N-acetylglucosamine (UDP-GlcNAc). The C-terminal domain catalyzes the transfer of acetyl group from acetyl coenzyme A to glucosamine-1-phosphate (GlcN-1-P) to produce N-acetylglucosamine-1-phosphate (GlcNAc-1-P), which is converted into UDP-GlcNAc by the transfer of uridine 5-monophosphate (from uridine 5-triphosphate), a reaction catalyzed by the N-terminal domain. The sequence is that of Bifunctional protein GlmU from Cupriavidus metallidurans (strain ATCC 43123 / DSM 2839 / NBRC 102507 / CH34) (Ralstonia metallidurans).